Here is a 483-residue protein sequence, read N- to C-terminus: tRNA sulfurtransferase (483 aa).

The THUMP domain occupies 62–166; sequence PQICDALTRV…QDKLTLIKAR (105 aa). ATP-binding positions include 184 to 185, Lys-266, Gly-288, and Gln-297; that span reads LI. Cys-345 and Cys-457 form a disulfide bridge. In terms of domain architecture, Rhodanese spans 405 to 483; the sequence is LADTDVLLDI…GYTNVKVYRP (79 aa). The Cysteine persulfide intermediate role is filled by Cys-457.

This sequence belongs to the ThiI family.

It is found in the cytoplasm. It catalyses the reaction [ThiI sulfur-carrier protein]-S-sulfanyl-L-cysteine + a uridine in tRNA + 2 reduced [2Fe-2S]-[ferredoxin] + ATP + H(+) = [ThiI sulfur-carrier protein]-L-cysteine + a 4-thiouridine in tRNA + 2 oxidized [2Fe-2S]-[ferredoxin] + AMP + diphosphate. The enzyme catalyses [ThiS sulfur-carrier protein]-C-terminal Gly-Gly-AMP + S-sulfanyl-L-cysteinyl-[cysteine desulfurase] + AH2 = [ThiS sulfur-carrier protein]-C-terminal-Gly-aminoethanethioate + L-cysteinyl-[cysteine desulfurase] + A + AMP + 2 H(+). It functions in the pathway cofactor biosynthesis; thiamine diphosphate biosynthesis. Its function is as follows. Catalyzes the ATP-dependent transfer of a sulfur to tRNA to produce 4-thiouridine in position 8 of tRNAs, which functions as a near-UV photosensor. Also catalyzes the transfer of sulfur to the sulfur carrier protein ThiS, forming ThiS-thiocarboxylate. This is a step in the synthesis of thiazole, in the thiamine biosynthesis pathway. The sulfur is donated as persulfide by IscS. This is tRNA sulfurtransferase from Yersinia enterocolitica serotype O:8 / biotype 1B (strain NCTC 13174 / 8081).